The following is a 644-amino-acid chain: Exoribonuclease 2 (644 aa).

The region spanning 189 to 516 is the RNB domain; it reads REDLTALNFV…NHRLLKAIIT (328 aa). In terms of domain architecture, S1 motif spans 561 to 643; that stretch reads DTRFTAEIID…ETRNVIARPV (83 aa).

It belongs to the RNR ribonuclease family. RNase II subfamily.

It localises to the cytoplasm. It catalyses the reaction Exonucleolytic cleavage in the 3'- to 5'-direction to yield nucleoside 5'-phosphates.. Functionally, involved in mRNA degradation. Hydrolyzes single-stranded polyribonucleotides processively in the 3' to 5' direction. The protein is Exoribonuclease 2 of Yersinia pseudotuberculosis serotype O:3 (strain YPIII).